A 73-amino-acid chain; its full sequence is Metallothionein-like protein type 2 (73 aa).

This sequence belongs to the metallothionein superfamily. Type 15 family.

Metallothioneins have a high content of cysteine residues that bind various heavy metals. The protein is Metallothionein-like protein type 2 of Solanum lycopersicum (Tomato).